The chain runs to 527 residues: Bifunctional dihydrofolate reductase-thymidylate synthase (527 aa).

Positions 28–238 constitute a DHFR domain; that stretch reads PFSVVVASDE…KKYQFEKLVP (211 aa). Residue Val32 coordinates substrate. NADP(+) is bound by residues Ala34 and 40 to 46; that span reads GIGDGGT. Asp54 is a substrate binding site. Residues 84–86 and 105–108 contribute to the NADP(+) site; these read RKT and LSRS. Substrate-binding residues include Ile160, Tyr166, and Thr184. 161-168 contributes to the NADP(+) binding site; it reads GGGTIYKQ. The interval 243 to 527 is thymidylate synthase; the sequence is EEQYLNLVGR…YPVISMEMAV (285 aa). Residue Arg263 participates in dUMP binding. Cys409 is a catalytic residue. DUMP-binding positions include His410, 428–432, Asn440, and 470–472; these read QRSCD and HVY.

The protein in the N-terminal section; belongs to the dihydrofolate reductase family. This sequence in the C-terminal section; belongs to the thymidylate synthase family. Homodimer.

The enzyme catalyses dUMP + (6R)-5,10-methylene-5,6,7,8-tetrahydrofolate = 7,8-dihydrofolate + dTMP. It carries out the reaction (6S)-5,6,7,8-tetrahydrofolate + NADP(+) = 7,8-dihydrofolate + NADPH + H(+). It participates in pyrimidine metabolism; dTTP biosynthesis. Its pathway is cofactor biosynthesis; tetrahydrofolate biosynthesis; 5,6,7,8-tetrahydrofolate from 7,8-dihydrofolate: step 1/1. In terms of biological role, bifunctional enzyme. Involved in de novo dTMP biosynthesis. Key enzyme in folate metabolism. Catalyzes an essential reaction for de novo glycine and purine synthesis, DNA precursor synthesis, and for the conversion of dUMP to dTMP. The sequence is that of Bifunctional dihydrofolate reductase-thymidylate synthase from Trypanosoma brucei brucei.